Here is a 319-residue protein sequence, read N- to C-terminus: N-acetyl-D-glucosamine kinase (319 aa).

ATP is bound at residue Thr14. Residues Asn37 and Asp113 each contribute to the substrate site. Thr135 contacts ATP. Substrate-binding positions include 153-155 (GWG) and Asp160. Residue Ala220 participates in ATP binding.

Belongs to the eukaryotic-type N-acetylglucosamine kinase family. In terms of assembly, homodimer.

The enzyme catalyses N-acetyl-D-glucosamine + ATP = N-acetyl-D-glucosamine 6-phosphate + ADP + H(+). Converts N-acetylglucosamine (GlcNAc), a major component of complex carbohydrates, into GlcNAc 6-phosphate. Also has ManNAc kinase activity. The protein is N-acetyl-D-glucosamine kinase (nagk) of Dictyostelium discoideum (Social amoeba).